The chain runs to 251 residues: Triosephosphate isomerase (251 aa).

9–11 (NWK) provides a ligand contact to substrate. His-95 (electrophile) is an active-site residue. The active-site Proton acceptor is the Glu-167. Residues Gly-173, Ser-213, and 234–235 (GG) each bind substrate.

It belongs to the triosephosphate isomerase family. In terms of assembly, homodimer.

The protein resides in the cytoplasm. It carries out the reaction D-glyceraldehyde 3-phosphate = dihydroxyacetone phosphate. The protein operates within carbohydrate biosynthesis; gluconeogenesis. It participates in carbohydrate degradation; glycolysis; D-glyceraldehyde 3-phosphate from glycerone phosphate: step 1/1. In terms of biological role, involved in the gluconeogenesis. Catalyzes stereospecifically the conversion of dihydroxyacetone phosphate (DHAP) to D-glyceraldehyde-3-phosphate (G3P). The polypeptide is Triosephosphate isomerase (Lacticaseibacillus casei (strain BL23) (Lactobacillus casei)).